A 239-amino-acid chain; its full sequence is Probable transcriptional regulatory protein Tcr_1104 (239 aa).

This sequence belongs to the TACO1 family.

It localises to the cytoplasm. The protein is Probable transcriptional regulatory protein Tcr_1104 of Hydrogenovibrio crunogenus (strain DSM 25203 / XCL-2) (Thiomicrospira crunogena).